Consider the following 457-residue polypeptide: Methylenetetrahydrofolate--tRNA-(uracil-5-)-methyltransferase TrmFO (457 aa).

7–12 (GAGLAG) is a binding site for FAD. The interval 38–58 (FTSRQDEKTGTHDVRNATQTR) is disordered. The span at 40–52 (SRQDEKTGTHDVR) shows a compositional bias: basic and acidic residues.

It belongs to the MnmG family. TrmFO subfamily. It depends on FAD as a cofactor.

Its subcellular location is the cytoplasm. It carries out the reaction uridine(54) in tRNA + (6R)-5,10-methylene-5,6,7,8-tetrahydrofolate + NADH + H(+) = 5-methyluridine(54) in tRNA + (6S)-5,6,7,8-tetrahydrofolate + NAD(+). It catalyses the reaction uridine(54) in tRNA + (6R)-5,10-methylene-5,6,7,8-tetrahydrofolate + NADPH + H(+) = 5-methyluridine(54) in tRNA + (6S)-5,6,7,8-tetrahydrofolate + NADP(+). Its function is as follows. Catalyzes the folate-dependent formation of 5-methyl-uridine at position 54 (M-5-U54) in all tRNAs. This Hydrogenobaculum sp. (strain Y04AAS1) protein is Methylenetetrahydrofolate--tRNA-(uracil-5-)-methyltransferase TrmFO.